A 483-amino-acid chain; its full sequence is Keratin, type II cytoskeletal 8 (483 aa).

A compositionally biased stretch (polar residues) spans 1-16 (MSIRVTQKSYKVSTSG). The interval 1-41 (MSIRVTQKSYKVSTSGPRAFSSRSYTSGPGSRISSSSFSRV) is disordered. The head stretch occupies residues 1–90 (MSIRVTQKSY…DPNIQAVRTQ (90 aa)). Ser9 bears the Phosphoserine; by PKC/PRKCE mark. Lys11 is covalently cross-linked (Glycyl lysine isopeptide (Lys-Gly) (interchain with G-Cter in SUMO2)). Ser13, Ser15, Ser21, and Ser22 each carry phosphoserine. Arg23 is subject to Omega-N-methylarginine. A Phosphoserine; by PKC/PRKCE modification is found at Ser24. The segment covering 24–41 (SYTSGPGSRISSSSFSRV) has biased composition (low complexity). Position 26 is a phosphothreonine (Thr26). A phosphoserine mark is found at Ser27 and Ser31. Position 32 is an omega-N-methylarginine (Arg32). Phosphoserine is present on residues Ser34, Ser37, and Ser39. Arg40 carries the omega-N-methylarginine modification. Residues Ser43 and Ser44 each carry the phosphoserine modification. Arg47 bears the Asymmetric dimethylarginine; alternate mark. Omega-N-methylarginine; alternate is present on Arg47. Ser74 carries the post-translational modification Phosphoserine; by MAPK. A coil 1A region spans residues 91–126 (EKEQIKTLNNKFASFIDKVRFLEQQNKMLETKWSLL). Residues 91-402 (EKEQIKTLNN…KLLEGEESRL (312 aa)) form the IF rod domain. Lys101 is modified (N6-malonyllysine). Glycyl lysine isopeptide (Lys-Gly) (interchain with G-Cter in SUMO2) cross-links involve residues Lys122 and Lys130. Positions 127–143 (QQQKTARSNMDNMFESY) are linker 1. The interval 144-235 (INNLRRQLET…QLYEEEIREL (92 aa)) is coil 1B. Residue Lys197 forms a Glycyl lysine isopeptide (Lys-Gly) (interchain with G-Cter in SUMO1); alternate linkage. Lys197 is covalently cross-linked (Glycyl lysine isopeptide (Lys-Gly) (interchain with G-Cter in SUMO2); alternate). Lys207 bears the N6-acetyllysine mark. Residue Tyr228 is modified to Phosphotyrosine. The tract at residues 236-259 (QSQISDTSVVLSMDNSRSLDMDSI) is linker 12. Ser253 and Ser258 each carry phosphoserine. The interval 260–398 (IAEVKAQYED…ATYRKLLEGE (139 aa)) is coil 2. A necessary for interaction with PNN region spans residues 261–382 (AEVKAQYEDI…EYQELMNVKL (122 aa)). Lys264 is covalently cross-linked (Glycyl lysine isopeptide (Lys-Gly) (interchain with G-Cter in SUMO2)). Ser274 is subject to Phosphoserine. Residue Lys285 forms a Glycyl lysine isopeptide (Lys-Gly) (interchain with G-Cter in SUMO2) linkage. Position 291 is a phosphoserine (Ser291). A Glycyl lysine isopeptide (Lys-Gly) (interchain with G-Cter in SUMO2); alternate cross-link involves residue Lys295. An N6-acetyllysine; alternate modification is found at Lys295. Residue Lys304 forms a Glycyl lysine isopeptide (Lys-Gly) (interchain with G-Cter in SUMO2) linkage. Residue Lys325 forms a Glycyl lysine isopeptide (Lys-Gly) (interchain with G-Cter in SUMO2); alternate linkage. Lys325 bears the N6-acetyllysine; alternate mark. At Ser330 the chain carries Phosphoserine. Lys393 is covalently cross-linked (Glycyl lysine isopeptide (Lys-Gly) (interchain with G-Cter in SUMO2)). The segment at 399–483 (ESRLESGMQN…VSESSDVLPK (85 aa)) is tail. Phosphoserine occurs at positions 400, 404, 410, 417, and 424. Residue Ser432 is modified to Phosphoserine; by CaMK2 and MAPK. Lys472 participates in a covalent cross-link: Glycyl lysine isopeptide (Lys-Gly) (interchain with G-Cter in SUMO1); alternate. Lys472 is covalently cross-linked (Glycyl lysine isopeptide (Lys-Gly) (interchain with G-Cter in SUMO2); alternate). Phosphoserine occurs at positions 475, 477, and 478.

The protein belongs to the intermediate filament family. In terms of assembly, heterotetramer of two type I and two type II keratins. Forms a heterodimer with KRT18. Associates with KRT20. Interacts with PLEC isoform 1C, when in a heterodimer with KRT18. Interacts with PNN. When associated with KRT19, interacts with DMD. Interacts with TCHP. Interacts with APEX1. Interacts with GPER1. Interacts with EPPK1. Interacts with PKP1 and PKP2. (Microbial infection) Interacts with hepatitis C virus/HCV core protein. In terms of processing, phosphorylation on serine residues is enhanced during EGF stimulation and mitosis. Ser-74 phosphorylation plays an important role in keratin filament reorganization. Post-translationally, O-glycosylated. O-GlcNAcylation at multiple sites increases solubility, and decreases stability by inducing proteasomal degradation. O-glycosylated (O-GlcNAcylated), in a cell cycle-dependent manner. Observed in muscle fibers accumulating in the costameres of myoplasm at the sarcolemma membrane in structures that contain dystrophin and spectrin. Expressed in gingival mucosa and hard palate of the oral cavity.

The protein resides in the cytoplasm. It localises to the nucleus. The protein localises to the nucleoplasm. It is found in the nucleus matrix. Functionally, together with KRT19, helps to link the contractile apparatus to dystrophin at the costameres of striated muscle. The polypeptide is Keratin, type II cytoskeletal 8 (KRT8) (Homo sapiens (Human)).